Reading from the N-terminus, the 144-residue chain is Transmembrane protein 170A (144 aa).

At 1–50 (MEREGSGGSGGSAGLLQQILSLKVVPRVGNGTLCPNSTSLCSFPEMWYGV) the chain is on the lumenal side. N-linked (GlcNAc...) asparagine glycans are attached at residues N30 and N36. Residues 51–71 (FLWALVSSLFFHVPAGLLALF) traverse the membrane as a helical segment. Topologically, residues 72–85 (TLRHHKYGRFMSVS) are cytoplasmic. Residues 86–106 (ILLMGIVGPITAGILTSAAIA) traverse the membrane as a helical segment. Residues 107–116 (GVYRAAGKEM) are Lumenal-facing. The chain crosses the membrane as a helical span at residues 117–137 (IPFEALTLGTGQTFCVLVVSF). The Cytoplasmic portion of the chain corresponds to 138 to 144 (LRILATL).

Belongs to the TMEM170 family. In terms of assembly, interacts with RTN4.

The protein resides in the endoplasmic reticulum membrane. It localises to the nucleus envelope. Its function is as follows. Acts as a regulator of endoplasmic reticulum (ER) and nuclear envelope (NE) morphogenesis. Affects the ratio between tubular ER and ER sheets by promoting sheet formation at the expense of tubules. Influences NE expansion, nuclear pore complex formation and proper localization of inner nuclear membrane proteins. The polypeptide is Transmembrane protein 170A (TMEM170A) (Homo sapiens (Human)).